The chain runs to 424 residues: D-inositol 3-phosphate glycosyltransferase (424 aa).

Residue His-9 coordinates 1D-myo-inositol 3-phosphate. UDP-N-acetyl-alpha-D-glucosamine is bound by residues 15-16 and Gly-23; that span reads QP. Residues 20–25, Lys-78, Tyr-110, Thr-134, and Arg-154 contribute to the 1D-myo-inositol 3-phosphate site; that span reads DSGGMN. 3 residues coordinate UDP-N-acetyl-alpha-D-glucosamine: Arg-231, Lys-236, and Arg-294. Mg(2+) contacts are provided by Tyr-303, Arg-304, and Ala-306. Residues Glu-316 and Glu-324 each coordinate UDP-N-acetyl-alpha-D-glucosamine. Thr-330 serves as a coordination point for Mg(2+).

The protein belongs to the glycosyltransferase group 1 family. MshA subfamily. In terms of assembly, homodimer.

It catalyses the reaction 1D-myo-inositol 3-phosphate + UDP-N-acetyl-alpha-D-glucosamine = 1D-myo-inositol 2-acetamido-2-deoxy-alpha-D-glucopyranoside 3-phosphate + UDP + H(+). In terms of biological role, catalyzes the transfer of a N-acetyl-glucosamine moiety to 1D-myo-inositol 3-phosphate to produce 1D-myo-inositol 2-acetamido-2-deoxy-glucopyranoside 3-phosphate in the mycothiol biosynthesis pathway. This chain is D-inositol 3-phosphate glycosyltransferase, found in Corynebacterium efficiens (strain DSM 44549 / YS-314 / AJ 12310 / JCM 11189 / NBRC 100395).